The primary structure comprises 291 residues: ATP synthase gamma chain (291 aa).

Belongs to the ATPase gamma chain family. As to quaternary structure, F-type ATPases have 2 components, CF(1) - the catalytic core - and CF(0) - the membrane proton channel. CF(1) has five subunits: alpha(3), beta(3), gamma(1), delta(1), epsilon(1). CF(0) has three main subunits: a, b and c.

Its subcellular location is the cell inner membrane. Functionally, produces ATP from ADP in the presence of a proton gradient across the membrane. The gamma chain is believed to be important in regulating ATPase activity and the flow of protons through the CF(0) complex. The sequence is that of ATP synthase gamma chain from Burkholderia lata (strain ATCC 17760 / DSM 23089 / LMG 22485 / NCIMB 9086 / R18194 / 383).